The primary structure comprises 287 residues: Ribosomal RNA small subunit methyltransferase A (287 aa).

Residues N28, L30, G55, E77, D103, and N123 each contribute to the S-adenosyl-L-methionine site.

This sequence belongs to the class I-like SAM-binding methyltransferase superfamily. rRNA adenine N(6)-methyltransferase family. RsmA subfamily.

It is found in the cytoplasm. It carries out the reaction adenosine(1518)/adenosine(1519) in 16S rRNA + 4 S-adenosyl-L-methionine = N(6)-dimethyladenosine(1518)/N(6)-dimethyladenosine(1519) in 16S rRNA + 4 S-adenosyl-L-homocysteine + 4 H(+). Specifically dimethylates two adjacent adenosines (A1518 and A1519) in the loop of a conserved hairpin near the 3'-end of 16S rRNA in the 30S particle. May play a critical role in biogenesis of 30S subunits. This chain is Ribosomal RNA small subunit methyltransferase A, found in Rhodopseudomonas palustris (strain BisB5).